A 714-amino-acid chain; its full sequence is Lipase maturation factor 2 (714 aa).

Helical transmembrane passes span 11-31 (LFLA…YLQI), 79-99 (MELL…CAPL), 103-125 (LLFA…FLYF), 159-179 (SVTF…SGVV), 221-241 (FSVV…FMPI), 257-277 (ILII…VLAF), 304-324 (TLLS…LLYW), 358-378 (VTLP…LSAL), and 398-418 (AVFA…FTYI). Asn-483 carries N-linked (GlcNAc...) asparagine glycosylation. A helical transmembrane segment spans residues 629 to 649 (PFSPHVVLWSLYVVAATTCLL). Over residues 654-669 (RRPRGGAPPTRHKAPK) the composition is skewed to basic residues. Positions 654–714 (RRPRGGAPPT…EGPRGTKRRK (61 aa)) are disordered. Residues 683 to 708 (RRKEGREAEERGEGRSRGAADGEGPR) are compositionally biased toward basic and acidic residues.

This sequence belongs to the lipase maturation factor family.

The protein localises to the endoplasmic reticulum membrane. Its function is as follows. Involved in the maturation of specific proteins in the endoplasmic reticulum. May be required for maturation and transport of active lipoprotein lipase (LPL) through the secretory pathway. This Gallus gallus (Chicken) protein is Lipase maturation factor 2 (LMF2).